The primary structure comprises 313 residues: tRNA-cytidine(32) 2-sulfurtransferase (313 aa).

A PP-loop motif motif is present at residues 60–65 (SGGKDS). [4Fe-4S] cluster contacts are provided by cysteine 135, cysteine 138, and cysteine 226.

The protein belongs to the TtcA family. As to quaternary structure, homodimer. The cofactor is Mg(2+). [4Fe-4S] cluster is required as a cofactor.

The protein localises to the cytoplasm. It catalyses the reaction cytidine(32) in tRNA + S-sulfanyl-L-cysteinyl-[cysteine desulfurase] + AH2 + ATP = 2-thiocytidine(32) in tRNA + L-cysteinyl-[cysteine desulfurase] + A + AMP + diphosphate + H(+). Its pathway is tRNA modification. Catalyzes the ATP-dependent 2-thiolation of cytidine in position 32 of tRNA, to form 2-thiocytidine (s(2)C32). The sulfur atoms are provided by the cysteine/cysteine desulfurase (IscS) system. This chain is tRNA-cytidine(32) 2-sulfurtransferase, found in Delftia acidovorans (strain DSM 14801 / SPH-1).